We begin with the raw amino-acid sequence, 592 residues long: Craniofacial development protein 2 (592 aa).

The segment covering 1–16 (MEEFDSKDISTSKDED) has biased composition (basic and acidic residues). Disordered regions lie at residues 1-225 (MEEF…KGQS) and 499-592 (VTNE…DCNN). The segment covering 25–42 (HEDDINELVKEDEVDGEE) has biased composition (acidic residues). Basic and acidic residues-rich tracts occupy residues 78-108 (SRES…RQEE) and 147-162 (KVEE…EVKL). A compositionally biased stretch (polar residues) spans 175 to 184 (LTQQGRLSGR). Composition is skewed to basic and acidic residues over residues 185 to 207 (TSED…RRAD), 508 to 523 (EEAK…EKPE), 552 to 562 (SVFKQDEKDKP), and 580 to 592 (EKCD…DCNN). The hydrophilic stretch occupies residues 499–578 (VTNEEDATNE…SVPSLPAGSG (80 aa)).

In terms of processing, phosphorylated by CK2 (casein kinase II) in vitro. In terms of tissue distribution, expressed in liver and lung with higher expression in brain.

It is found in the cytoplasm. The protein resides in the nucleus. The protein is Craniofacial development protein 2 (CFDP2) of Bos taurus (Bovine).